Reading from the N-terminus, the 103-residue chain is Small ribosomal subunit protein uS10 (103 aa).

The protein belongs to the universal ribosomal protein uS10 family. Part of the 30S ribosomal subunit.

Its function is as follows. Involved in the binding of tRNA to the ribosomes. The polypeptide is Small ribosomal subunit protein uS10 (Ralstonia pickettii (strain 12J)).